The sequence spans 403 residues: 1-deoxy-D-xylulose 5-phosphate reductoisomerase (403 aa).

Residues Thr18, Gly19, Ser20, Ile21, Gln46, and Asn132 each contribute to the NADPH site. Lys133 is a binding site for 1-deoxy-D-xylulose 5-phosphate. Position 134 (Glu134) interacts with NADPH. Residue Asp158 participates in Mn(2+) binding. Residues Ser159, Glu160, Ser189, and His212 each coordinate 1-deoxy-D-xylulose 5-phosphate. Glu160 is a Mn(2+) binding site. Position 218 (Gly218) interacts with NADPH. Positions 225, 230, 231, and 234 each coordinate 1-deoxy-D-xylulose 5-phosphate. Glu234 contributes to the Mn(2+) binding site.

Belongs to the DXR family. Requires Mg(2+) as cofactor. Mn(2+) serves as cofactor.

The catalysed reaction is 2-C-methyl-D-erythritol 4-phosphate + NADP(+) = 1-deoxy-D-xylulose 5-phosphate + NADPH + H(+). Its pathway is isoprenoid biosynthesis; isopentenyl diphosphate biosynthesis via DXP pathway; isopentenyl diphosphate from 1-deoxy-D-xylulose 5-phosphate: step 1/6. Its function is as follows. Catalyzes the NADPH-dependent rearrangement and reduction of 1-deoxy-D-xylulose-5-phosphate (DXP) to 2-C-methyl-D-erythritol 4-phosphate (MEP). In Aromatoleum aromaticum (strain DSM 19018 / LMG 30748 / EbN1) (Azoarcus sp. (strain EbN1)), this protein is 1-deoxy-D-xylulose 5-phosphate reductoisomerase.